Reading from the N-terminus, the 292-residue chain is BTB/POZ domain-containing protein KCTD7 (292 aa).

Positions 1 to 27 (MVVFSAASDSEKPGDAMSGADKGEEEY) are disordered. Residues 56–144 (IPLNVGGTYF…YAIGPLLENL (89 aa)) enclose the BTB domain.

It localises to the cell membrane. It is found in the cytoplasm. The protein localises to the cytosol. The polypeptide is BTB/POZ domain-containing protein KCTD7 (kctd7) (Danio rerio (Zebrafish)).